The primary structure comprises 178 residues: Large ribosomal subunit protein uL6 (178 aa).

Belongs to the universal ribosomal protein uL6 family. Part of the 50S ribosomal subunit.

In terms of biological role, this protein binds to the 23S rRNA, and is important in its secondary structure. It is located near the subunit interface in the base of the L7/L12 stalk, and near the tRNA binding site of the peptidyltransferase center. The polypeptide is Large ribosomal subunit protein uL6 (Lactococcus lactis subsp. cremoris (strain SK11)).